A 136-amino-acid polypeptide reads, in one-letter code: Large ribosomal subunit protein bL17 (136 aa).

This sequence belongs to the bacterial ribosomal protein bL17 family. In terms of assembly, part of the 50S ribosomal subunit. Contacts protein L32.

In Rhodopseudomonas palustris (strain BisA53), this protein is Large ribosomal subunit protein bL17.